The sequence spans 304 residues: N-acetylmuramic acid 6-phosphate etherase (304 aa).

One can recognise an SIS domain in the interval 58–221 (IAERIHRGGR…STGVMIKLGK (164 aa)). E86 functions as the Proton donor in the catalytic mechanism. Residue E117 is part of the active site.

It belongs to the GCKR-like family. MurNAc-6-P etherase subfamily. In terms of assembly, homodimer.

It catalyses the reaction N-acetyl-D-muramate 6-phosphate + H2O = N-acetyl-D-glucosamine 6-phosphate + (R)-lactate. Its pathway is amino-sugar metabolism; N-acetylmuramate degradation. Specifically catalyzes the cleavage of the D-lactyl ether substituent of MurNAc 6-phosphate, producing GlcNAc 6-phosphate and D-lactate. In Clostridium beijerinckii (strain ATCC 51743 / NCIMB 8052) (Clostridium acetobutylicum), this protein is N-acetylmuramic acid 6-phosphate etherase.